The primary structure comprises 229 residues: Demethylmenaquinone methyltransferase (229 aa).

Residues Thr57, Asp77, and Asp101–Val102 contribute to the S-adenosyl-L-methionine site.

This sequence belongs to the class I-like SAM-binding methyltransferase superfamily. MenG/UbiE family.

The enzyme catalyses a 2-demethylmenaquinol + S-adenosyl-L-methionine = a menaquinol + S-adenosyl-L-homocysteine + H(+). The protein operates within quinol/quinone metabolism; menaquinone biosynthesis; menaquinol from 1,4-dihydroxy-2-naphthoate: step 2/2. In terms of biological role, methyltransferase required for the conversion of demethylmenaquinol (DMKH2) to menaquinol (MKH2). This chain is Demethylmenaquinone methyltransferase, found in Chlamydia trachomatis serovar A (strain ATCC VR-571B / DSM 19440 / HAR-13).